Here is a 509-residue protein sequence, read N- to C-terminus: ATP synthase subunit alpha (509 aa).

169–176 (GDRKTGKT) lines the ATP pocket.

It belongs to the ATPase alpha/beta chains family. F-type ATPases have 2 components, CF(1) - the catalytic core - and CF(0) - the membrane proton channel. CF(1) has five subunits: alpha(3), beta(3), gamma(1), delta(1), epsilon(1). CF(0) has three main subunits: a(1), b(2) and c(9-12). The alpha and beta chains form an alternating ring which encloses part of the gamma chain. CF(1) is attached to CF(0) by a central stalk formed by the gamma and epsilon chains, while a peripheral stalk is formed by the delta and b chains.

It is found in the cell membrane. The catalysed reaction is ATP + H2O + 4 H(+)(in) = ADP + phosphate + 5 H(+)(out). Functionally, produces ATP from ADP in the presence of a proton gradient across the membrane. The alpha chain is a regulatory subunit. The protein is ATP synthase subunit alpha of Lacticaseibacillus casei (strain BL23) (Lactobacillus casei).